Here is a 178-residue protein sequence, read N- to C-terminus: Large ribosomal subunit protein uL6c (178 aa).

Belongs to the universal ribosomal protein uL6 family. Part of the 50S ribosomal subunit.

It localises to the plastid. Its subcellular location is the chloroplast. In terms of biological role, binds 23S rRNA. The protein is Large ribosomal subunit protein uL6c (rpl6) of Phaeodactylum tricornutum (strain CCAP 1055/1).